We begin with the raw amino-acid sequence, 341 residues long: Lipoyl synthase (341 aa).

Cysteine 85, cysteine 90, cysteine 96, cysteine 111, cysteine 115, cysteine 118, and serine 325 together coordinate [4Fe-4S] cluster. A Radical SAM core domain is found at 97-314; sequence FSGGTATFMI…AEEGYKMGFK (218 aa).

Belongs to the radical SAM superfamily. Lipoyl synthase family. The cofactor is [4Fe-4S] cluster.

Its subcellular location is the cytoplasm. The enzyme catalyses [[Fe-S] cluster scaffold protein carrying a second [4Fe-4S](2+) cluster] + N(6)-octanoyl-L-lysyl-[protein] + 2 oxidized [2Fe-2S]-[ferredoxin] + 2 S-adenosyl-L-methionine + 4 H(+) = [[Fe-S] cluster scaffold protein] + N(6)-[(R)-dihydrolipoyl]-L-lysyl-[protein] + 4 Fe(3+) + 2 hydrogen sulfide + 2 5'-deoxyadenosine + 2 L-methionine + 2 reduced [2Fe-2S]-[ferredoxin]. Its pathway is protein modification; protein lipoylation via endogenous pathway; protein N(6)-(lipoyl)lysine from octanoyl-[acyl-carrier-protein]: step 2/2. In terms of biological role, catalyzes the radical-mediated insertion of two sulfur atoms into the C-6 and C-8 positions of the octanoyl moiety bound to the lipoyl domains of lipoate-dependent enzymes, thereby converting the octanoylated domains into lipoylated derivatives. The chain is Lipoyl synthase from Pseudomonas fluorescens (strain SBW25).